The sequence spans 372 residues: tRNA-specific 2-thiouridylase MnmA (372 aa).

ATP contacts are provided by residues 16–23 and M42; that span reads GMSGGVDS. Positions 102–104 are interaction with target base in tRNA; it reads NPD. C107 (nucleophile) is an active-site residue. The cysteines at positions 107 and 205 are disulfide-linked. G132 provides a ligand contact to ATP. An interaction with tRNA region spans residues 155–157; that stretch reads KDQ. C205 acts as the Cysteine persulfide intermediate in catalysis. Residues 317–318 are interaction with tRNA; the sequence is RY.

Belongs to the MnmA/TRMU family.

The protein resides in the cytoplasm. It catalyses the reaction S-sulfanyl-L-cysteinyl-[protein] + uridine(34) in tRNA + AH2 + ATP = 2-thiouridine(34) in tRNA + L-cysteinyl-[protein] + A + AMP + diphosphate + H(+). Its function is as follows. Catalyzes the 2-thiolation of uridine at the wobble position (U34) of tRNA, leading to the formation of s(2)U34. This chain is tRNA-specific 2-thiouridylase MnmA, found in Shewanella baltica (strain OS195).